The primary structure comprises 84 residues: Anthracycline acyl carrier protein DauA (84 aa).

The Carrier domain maps to Glu3–Leu80. At Ser40 the chain carries O-(pantetheine 4'-phosphoryl)serine.

It participates in antibiotic biosynthesis; daunorubicin biosynthesis. It functions in the pathway antibiotic biosynthesis; carminomycin biosynthesis. The protein operates within antibiotic biosynthesis; rhodomycin biosynthesis. Its pathway is antibiotic biosynthesis; aclacinomycin biosynthesis. Functionally, involved in the biosynthesis of aklanonate which is an important precursor common to the formation of the clinically significant anthracyclines such as carminomycin, daunorubicin (daunomycin), rhodomycin, aclacinomycin T (aklavin) and aclacinomycin A (aclarubicin). These compounds are aromatic polyketide antibiotics that exhibit high cytotoxicity and are widely applied in the chemotherapy of a variety of cancers. The protein is Anthracycline acyl carrier protein DauA (dauA) of Streptomyces sp. (strain C5).